We begin with the raw amino-acid sequence, 435 residues long: Acetyltransferase atnC (435 aa).

The next 3 helical transmembrane spans lie at A10–I30, Y40–L60, and S68–L88. N203 is a glycosylation site (N-linked (GlcNAc...) asparagine). A run of 3 helical transmembrane segments spans residues F306–S326, I333–Y353, and V370–P390. N406 is a glycosylation site (N-linked (GlcNAc...) asparagine). Residues L407 to V427 form a helical membrane-spanning segment.

Belongs to the wax synthase family.

The protein localises to the membrane. Its pathway is secondary metabolite biosynthesis; terpenoid biosynthesis. Acetyltransferase; part of the gene cluster that mediates the biosynthesis of the meroterpenoids arthripenoids. The pathway begins with the HR-PKS atnH that catalyzes two chain-extension steps to form a reduced triketide, which then primes the SAT domain in the NR-PKS atnG to initiate three more cycles of extension to give a linear hexaketide corresponding to the polyketide part of arthripenoids. The FAD-dependent monooxygenase atnJ then performs an oxidative decarboxylation at C11 of the atnH/atnG product, via an electrophilic aromatic hydroxylation with concomitant ipso-decarboxylation. The membrane-bound polyprenyl transferase atnF then introduces a farnesyl group before the FAD-dependent monooxygenase atnK functions as the first epoxidase on terminal C12'-C13' olefin, followed by a second epoxidation on C7'-C8' catalyzed by atnA. The terpene cyclase/mutase atnI then initiates the sequential tricyclic ring formation through protonation of the terminal epoxide and catalyzes the regioselective and stereoselective 6/6/6-tricyclic ring formation. The cytochrome P450 monooxygenase atnM is responsible for hydroxylating both C1' and C10'. The next steps may involve ketoreduction and acetyl transfer by the ketoreductase atnB and the acetyltransferase atnC, and lead to the production of arthripenoid B, the final biosynthetic product of the atn cluster. The hydroquinone moiety in arthripenoid B is prone to undergo spontaneous oxidation to afford a benzoquinone compound, a key intermediate for generating structure diversity. For instance, addition of a cysteine followed by ring contraction gives arthripenoid A, tautomerization gives the main product arthripenoid C, addition of a molecular of water or amine affords arthripenoid D or E, respectively, and loss of one water forms arthripenoid F. The sequence is that of Acetyltransferase atnC from Arthrinium sp.